A 255-amino-acid polypeptide reads, in one-letter code: MLTTFLLGLTFFTRIPVPGKLNFSEEKFNRAPIFLPAYGLVTGGILALIIELFGRSFPGFFWAGVIIAGQIYLSGALHIDGLLDSLDAIYSNRDREKRLEILKDSRVGSMAVAFFGAFLILKYGSYASFTPKVQAFTVLISEIILRGTGYLVIYSFPYVGSSLGRGFKDNASTAGLIFTLGQTLIFTLGAAAFFNFSLIKILIILLLAYLFAFVVAARWQQFFGGLTGDNYGGIMELTGLFVPVAVLLINNIGVV.

A run of 7 helical transmembrane segments spans residues 33 to 53 (IFLP…IELF), 57 to 77 (FPGF…SGAL), 107 to 127 (VGSM…GSYA), 136 to 156 (FTVL…IYSF), 174 to 194 (AGLI…AAFF), 196 to 216 (FSLI…FVVA), and 234 to 254 (IMEL…NIGV).

The protein belongs to the CobS family. Requires Mg(2+) as cofactor.

It localises to the cell membrane. It carries out the reaction alpha-ribazole + adenosylcob(III)inamide-GDP = adenosylcob(III)alamin + GMP + H(+). The catalysed reaction is alpha-ribazole 5'-phosphate + adenosylcob(III)inamide-GDP = adenosylcob(III)alamin 5'-phosphate + GMP + H(+). The protein operates within cofactor biosynthesis; adenosylcobalamin biosynthesis; adenosylcobalamin from cob(II)yrinate a,c-diamide: step 7/7. Joins adenosylcobinamide-GDP and alpha-ribazole to generate adenosylcobalamin (Ado-cobalamin). Also synthesizes adenosylcobalamin 5'-phosphate from adenosylcobinamide-GDP and alpha-ribazole 5'-phosphate. This Carboxydothermus hydrogenoformans (strain ATCC BAA-161 / DSM 6008 / Z-2901) protein is Adenosylcobinamide-GDP ribazoletransferase.